We begin with the raw amino-acid sequence, 437 residues long: Protein WVD2-like 5 (437 aa).

Disordered regions lie at residues 1–22, 38–210, and 254–437; these read MDPE…GGLA, TVDT…FSFK, and LRKS…AVEH. The span at 41–55 shows a compositional bias: low complexity; it reads TTSESQNENSANSST. The segment covering 58–86 has biased composition (basic and acidic residues); that stretch reads TIEHVKEAAEGTQVEHVDDSKCMKGEKAQ. Residues 121–140 are compositionally biased toward polar residues; sequence SNGSVAPNVQTTNPLKSKSF. Over residues 151–167 the composition is skewed to basic and acidic residues; it reads GKHDSAPAESADGEKVK. Serine 208 bears the Phosphoserine mark. Residues 288 to 297 are compositionally biased toward basic residues; the sequence is KSPKLGRKKT. The span at 360–371 shows a compositional bias: low complexity; sequence PAPAKAAIIPAK. The span at 408–437 shows a compositional bias: basic and acidic residues; the sequence is EDSHETVSPRMNEDRADKSIEVSEAVAVEH. Serine 415 is subject to Phosphoserine.

It belongs to the TPX2 family. Expressed in seedlings.

It localises to the cytoplasm. It is found in the cytoskeleton. Functionally, microtubule-associated protein (MAP) that regulates the orientation of interphase cortical microtubules. This is Protein WVD2-like 5 from Arabidopsis thaliana (Mouse-ear cress).